The primary structure comprises 56 residues: Large ribosomal subunit protein bL32 (56 aa).

The span at 1–16 (MAVQKNKKSRSKRGMR) shows a compositional bias: basic residues. The disordered stretch occupies residues 1-36 (MAVQKNKKSRSKRGMRRSHDSLSTPQLSVDSTSGEL). Residues 21-34 (SLSTPQLSVDSTSG) show a composition bias toward polar residues.

Belongs to the bacterial ribosomal protein bL32 family.

This is Large ribosomal subunit protein bL32 from Shewanella sediminis (strain HAW-EB3).